The sequence spans 471 residues: MKPKTIIDKIWENHVVYREEGKPDLLYIDLHLVHEVTSPQAFEGLRQKGRKVRRPDLTFATMDHNVPTVNRFVITDEVARNQIAALERNCREFGIPLADLHSEEQGIVHVIGPELGLTQPGKTIVCGDSHTSTHGAFGALAFGIGTSEVEHVLATQTLWQHKPKTLQICINGRLGKGVTAKDVILAIIGRYGVGVGTGYIIEFTGEAIRRMSMEERMTICNMSIEAGARAGLISPDETTFAYLRGRKYAPKGEEFDKAVERWRALASDEGAKYDKTIEIDASTIAPMVTWGTNPAMSTSVDGVVPHPEQFESKTEQNAVRRALEYMGLKPGTPITDIPVQHVFIGSCTNSRLSDLRAAASIVKGKKVAPGVRALVVPGSQQVKKQAEAEGLAQIFIDAGFEWRDSGCSACLGMNPDIIPEGEHCASTSNRNFEGRQGKGARTHLVSPVMAAAAAIYGHFVDVRQLEAEPVC.

The [4Fe-4S] cluster site is built by Cys-347, Cys-407, and Cys-410.

The protein belongs to the aconitase/IPM isomerase family. LeuC type 1 subfamily. As to quaternary structure, heterodimer of LeuC and LeuD. The cofactor is [4Fe-4S] cluster.

It catalyses the reaction (2R,3S)-3-isopropylmalate = (2S)-2-isopropylmalate. It functions in the pathway amino-acid biosynthesis; L-leucine biosynthesis; L-leucine from 3-methyl-2-oxobutanoate: step 2/4. Its function is as follows. Catalyzes the isomerization between 2-isopropylmalate and 3-isopropylmalate, via the formation of 2-isopropylmaleate. The chain is 3-isopropylmalate dehydratase large subunit from Geobacillus kaustophilus (strain HTA426).